The chain runs to 214 residues: Phosphatidylserine decarboxylase proenzyme (214 aa).

The active-site Schiff-base intermediate with substrate; via pyruvic acid is the Ser182. The residue at position 182 (Ser182) is a Pyruvic acid (Ser); by autocatalysis.

This sequence belongs to the phosphatidylserine decarboxylase family. PSD-A subfamily. Heterodimer of a large membrane-associated beta subunit and a small pyruvoyl-containing alpha subunit. Requires pyruvate as cofactor. In terms of processing, is synthesized initially as an inactive proenzyme. Formation of the active enzyme involves a self-maturation process in which the active site pyruvoyl group is generated from an internal serine residue via an autocatalytic post-translational modification. Two non-identical subunits are generated from the proenzyme in this reaction, and the pyruvate is formed at the N-terminus of the alpha chain, which is derived from the carboxyl end of the proenzyme. The post-translation cleavage follows an unusual pathway, termed non-hydrolytic serinolysis, in which the side chain hydroxyl group of the serine supplies its oxygen atom to form the C-terminus of the beta chain, while the remainder of the serine residue undergoes an oxidative deamination to produce ammonia and the pyruvoyl prosthetic group on the alpha chain.

Its subcellular location is the cell membrane. The catalysed reaction is a 1,2-diacyl-sn-glycero-3-phospho-L-serine + H(+) = a 1,2-diacyl-sn-glycero-3-phosphoethanolamine + CO2. Its pathway is phospholipid metabolism; phosphatidylethanolamine biosynthesis; phosphatidylethanolamine from CDP-diacylglycerol: step 2/2. Catalyzes the formation of phosphatidylethanolamine (PtdEtn) from phosphatidylserine (PtdSer). This chain is Phosphatidylserine decarboxylase proenzyme, found in Burkholderia cenocepacia (strain HI2424).